Here is a 327-residue protein sequence, read N- to C-terminus: PDZ and LIM domain protein 1 (327 aa).

Thr2 bears the N-acetylthreonine mark. One can recognise a PDZ domain in the interval 3 to 85 (TQQIVLQGPG…NMTLTVSRSE (83 aa)). Residues Ser90 and Ser130 each carry the phosphoserine modification. Tyr142 is subject to Phosphotyrosine. The segment at 161-186 (VESKTSASGEEANSRPSAQPHPSGGL) is disordered. One can recognise an LIM zinc-binding domain in the interval 256–315 (PICDKCGTGIVGVFVKLRDHHRHPECYVCTDCGINLKQKGHFFVGDQIYCEKHARERVTP). Cys258, Cys261, His278, Cys281, Cys284, Cys287, Cys305, and His308 together coordinate Zn(2+). A Phosphothreonine modification is found at Thr314. The residue at position 319 (Tyr319) is a Phosphotyrosine.

In terms of assembly, interacts with ACTN1. Interacts with ACTN2 and ACTN4. Interacts with PDLIM4. As to expression, expressed most abundantly in heart, lung and liver, moderately in spleen and skeletal muscle, and at extremely low levels (if at all) in testis and brain tissues.

The protein localises to the cytoplasm. The protein resides in the cytoskeleton. Its subcellular location is the myofibril. It localises to the sarcomere. It is found in the z line. Functionally, cytoskeletal protein that may act as an adapter that brings other proteins (like kinases) to the cytoskeleton. Involved in assembly, disassembly and directioning of stress fibers in fibroblasts. Required for the localization of ACTN1 and PALLD to stress fibers. Required for cell migration and in maintaining cell polarity of fibroblasts. This Rattus norvegicus (Rat) protein is PDZ and LIM domain protein 1 (Pdlim1).